Reading from the N-terminus, the 520-residue chain is Probable cytochrome P450 4p2 (520 aa).

Heme contacts are provided by Glu325 and Cys464.

The protein belongs to the cytochrome P450 family. Heme serves as cofactor.

It is found in the endoplasmic reticulum membrane. The protein resides in the microsome membrane. In terms of biological role, may be involved in the metabolism of insect hormones and in the breakdown of synthetic insecticides. The chain is Probable cytochrome P450 4p2 (Cyp4p2) from Drosophila melanogaster (Fruit fly).